The following is a 186-amino-acid chain: Threonylcarbamoyl-AMP synthase (186 aa).

The 185-residue stretch at 2–186 (PNEFELAVAA…ARTGAIIRPS (185 aa)) folds into the YrdC-like domain.

It belongs to the SUA5 family. TsaC subfamily.

It localises to the cytoplasm. It catalyses the reaction L-threonine + hydrogencarbonate + ATP = L-threonylcarbamoyladenylate + diphosphate + H2O. Functionally, required for the formation of a threonylcarbamoyl group on adenosine at position 37 (t(6)A37) in tRNAs that read codons beginning with adenine. Catalyzes the conversion of L-threonine, HCO(3)(-)/CO(2) and ATP to give threonylcarbamoyl-AMP (TC-AMP) as the acyladenylate intermediate, with the release of diphosphate. This Aeromonas hydrophila subsp. hydrophila (strain ATCC 7966 / DSM 30187 / BCRC 13018 / CCUG 14551 / JCM 1027 / KCTC 2358 / NCIMB 9240 / NCTC 8049) protein is Threonylcarbamoyl-AMP synthase.